Consider the following 312-residue polypeptide: Protein-methionine-sulfoxide reductase catalytic subunit MsrP (312 aa).

Residues 1-45 (MPVYRPPRIAASEITPERFFLDRRSFLAAAGGLVLGGTGMAHAAA) constitute a signal peptide (tat-type signal). Mo-molybdopterin is bound by residues asparagine 69, 72–73 (YE), cysteine 126, threonine 161, asparagine 211, arginine 216, and 227–229 (GIK).

It belongs to the MsrP family. In terms of assembly, heterodimer of a catalytic subunit (MsrP) and a heme-binding subunit (MsrQ). The cofactor is Mo-molybdopterin. In terms of processing, predicted to be exported by the Tat system. The position of the signal peptide cleavage has not been experimentally proven.

The protein resides in the periplasm. The catalysed reaction is L-methionyl-[protein] + a quinone + H2O = L-methionyl-(S)-S-oxide-[protein] + a quinol. It catalyses the reaction L-methionyl-[protein] + a quinone + H2O = L-methionyl-(R)-S-oxide-[protein] + a quinol. Its function is as follows. Part of the MsrPQ system that repairs oxidized periplasmic proteins containing methionine sulfoxide residues (Met-O), using respiratory chain electrons. Thus protects these proteins from oxidative-stress damage caused by reactive species of oxygen and chlorine generated by the host defense mechanisms. MsrPQ is essential for the maintenance of envelope integrity under bleach stress, rescuing a wide series of structurally unrelated periplasmic proteins from methionine oxidation. The catalytic subunit MsrP is non-stereospecific, being able to reduce both (R-) and (S-) diastereoisomers of methionine sulfoxide. The chain is Protein-methionine-sulfoxide reductase catalytic subunit MsrP from Sinorhizobium fredii (strain NBRC 101917 / NGR234).